The chain runs to 284 residues: Tropomyosin (284 aa).

The stretch at Met1–Tyr284 forms a coiled coil. 2 stretches are compositionally biased toward basic and acidic residues: residues Leu29–Glu42 and Ala111–Ala136. Disordered regions lie at residues Leu29–Arg49 and Ala111–Lys149.

The protein belongs to the tropomyosin family.

Its function is as follows. Tropomyosin, in association with the troponin complex, plays a central role in the calcium dependent regulation of muscle contraction. The chain is Tropomyosin from Clonorchis sinensis (Chinese liver fluke).